Here is a 187-residue protein sequence, read N- to C-terminus: 2-oxoglutarate synthase subunit KorC (187 aa).

In terms of assembly, heterotetramer of the KorA, KorB, KorC and KorD subunits.

The enzyme catalyses 2 oxidized [2Fe-2S]-[ferredoxin] + 2-oxoglutarate + CoA = succinyl-CoA + 2 reduced [2Fe-2S]-[ferredoxin] + CO2 + H(+). This chain is 2-oxoglutarate synthase subunit KorC (korC), found in Archaeoglobus fulgidus (strain ATCC 49558 / DSM 4304 / JCM 9628 / NBRC 100126 / VC-16).